Consider the following 265-residue polypeptide: Mlc titration factor A (265 aa).

Zn(2+) contacts are provided by histidine 111, histidine 148, histidine 152, and glutamate 211.

This sequence belongs to the MtfA family. In terms of assembly, interacts with Mlc. The cofactor is Zn(2+).

It localises to the cytoplasm. In terms of biological role, involved in the modulation of the activity of the glucose-phosphotransferase system (glucose-PTS). Interacts with the transcriptional repressor Mlc, preventing its interaction with DNA and leading to the modulation of expression of genes regulated by Mlc, including ptsG, which encodes the PTS system glucose-specific EIICB component. Its function is as follows. Shows zinc-dependent metallopeptidase activity. This Escherichia coli O6:K15:H31 (strain 536 / UPEC) protein is Mlc titration factor A.